The chain runs to 480 residues: Probable efflux pump outer membrane protein SepC (480 aa).

The N-terminal stretch at 1 to 16 (MKTHYLSIALSVALSG) is a signal peptide. Residue Cys17 is the site of N-palmitoyl cysteine attachment. Cys17 carries S-diacylglycerol cysteine lipidation.

This sequence belongs to the outer membrane factor (OMF) (TC 1.B.17) family.

It is found in the cell outer membrane. In terms of biological role, probable outer membrane component of the SepABC efflux pump with unknown specificity. In Pseudomonas putida (strain ATCC 700007 / DSM 6899 / JCM 31910 / BCRC 17059 / LMG 24140 / F1), this protein is Probable efflux pump outer membrane protein SepC (sepC).